Consider the following 784-residue polypeptide: 1-phosphatidylinositol 4,5-bisphosphate phosphodiesterase delta-3-A (784 aa).

The segment at 1–25 (MLGRKKNPETVQTESKSVESKTHDP) is disordered. Residues 16 to 25 (KSVESKTHDP) are compositionally biased toward basic and acidic residues. The PH domain maps to 38–149 (LLMLQGSKMM…WVRGIRTLKD (112 aa)). The interval 48-78 (KVRSQRWRKDRRLKLLEDCVTVWCESSKTSR) is substrate binding. EF-hand domains follow at residues 159-194 (KLDHWIRGYLRRADQNQDGKMSYDEVKHLLQLINID), 195-230 (LNEQYARTLFKKCDRSCDGRLDHVEIEEFCREMMRR), and 227-262 (MMRRPELDAVFRHYSGNGCVLTTLELRDFLGDQGED). Ca(2+) contacts are provided by Asp172, Asn174, Asp176, Lys178, Glu183, Asp208, Ser210, Asp212, Arg214, and Glu219. Residues 313–458 (QDMSKPLAHY…LKGRILLKGK (146 aa)) form the PI-PLC X-box domain. His328 is an active-site residue. Ca(2+) contacts are provided by Asn329, Glu358, and Asp360. The active site involves His373. Glu407 contacts Ca(2+). The substrate site is built by Lys456 and Lys458. The segment at 473 to 498 (FTNSSDEESVAGGNKKESKKDLARSA) is disordered. Over residues 486 to 495 (NKKESKKDLA) the composition is skewed to basic and acidic residues. Positions 506–621 (LSDLVVYCQS…GYVLKPEFLC (116 aa)) constitute a PI-PLC Y-box domain. Positions 534 and 561 each coordinate substrate. The 130-residue stretch at 621–750 (CDPKSDFDPE…TGYRHVHLLK (130 aa)) folds into the C2 domain. Residues Ile664, Asp666, Asn690, Asp719, and Asp721 each contribute to the Ca(2+) site.

The cofactor is Ca(2+).

The protein resides in the membrane. It localises to the cytoplasm. Its subcellular location is the cleavage furrow. It catalyses the reaction a 1,2-diacyl-sn-glycero-3-phospho-(1D-myo-inositol-4,5-bisphosphate) + H2O = 1D-myo-inositol 1,4,5-trisphosphate + a 1,2-diacyl-sn-glycerol + H(+). Hydrolyzes the phosphatidylinositol 4,5-bisphosphate (PIP2) to generate 2 second messenger molecules diacylglycerol (DAG) and inositol 1,4,5-trisphosphate (IP3). DAG mediates the activation of protein kinase C (PKC), while IP3 releases Ca(2+) from intracellular stores. In Danio rerio (Zebrafish), this protein is 1-phosphatidylinositol 4,5-bisphosphate phosphodiesterase delta-3-A (plcd3a).